Reading from the N-terminus, the 1396-residue chain is DNA-directed RNA polymerase subunit beta' (1396 aa).

Zn(2+) is bound by residues C70, C72, C85, and C88. D460, D462, and D464 together coordinate Mg(2+). Zn(2+) contacts are provided by C807, C881, C888, and C891. A compositionally biased stretch (acidic residues) spans 1361–1378; that stretch reads EPEEIEEPVPEDLEDETA. The interval 1361–1396 is disordered; the sequence is EPEEIEEPVPEDLEDETAGADSAQAASEESVAEGKD. Residues 1379 to 1389 are compositionally biased toward low complexity; that stretch reads GADSAQAASEE.

It belongs to the RNA polymerase beta' chain family. In terms of assembly, the RNAP catalytic core consists of 2 alpha, 1 beta, 1 beta' and 1 omega subunit. When a sigma factor is associated with the core the holoenzyme is formed, which can initiate transcription. It depends on Mg(2+) as a cofactor. Requires Zn(2+) as cofactor.

The enzyme catalyses RNA(n) + a ribonucleoside 5'-triphosphate = RNA(n+1) + diphosphate. Its function is as follows. DNA-dependent RNA polymerase catalyzes the transcription of DNA into RNA using the four ribonucleoside triphosphates as substrates. The sequence is that of DNA-directed RNA polymerase subunit beta' from Syntrophotalea carbinolica (strain DSM 2380 / NBRC 103641 / GraBd1) (Pelobacter carbinolicus).